The following is a 142-amino-acid chain: Large ribosomal subunit protein uL13 (142 aa).

This sequence belongs to the universal ribosomal protein uL13 family. As to quaternary structure, part of the 50S ribosomal subunit.

This protein is one of the early assembly proteins of the 50S ribosomal subunit, although it is not seen to bind rRNA by itself. It is important during the early stages of 50S assembly. The protein is Large ribosomal subunit protein uL13 of Aliivibrio fischeri (strain ATCC 700601 / ES114) (Vibrio fischeri).